Reading from the N-terminus, the 1103-residue chain is Bifunctional cytochrome P450/NADPH--P450 reductase (1103 aa).

The tract at residues 1 to 491 (MSTPKAEPVP…SSSEHADHAA (491 aa)) is cytochrome P450. Position 415 (C415) interacts with heme. Residues 492–1103 (GHGKAGAAKK…KERYTTDIFA (612 aa)) are NADPH--P450 reductase. The Flavodoxin-like domain occupies 508–649 (MHVYYGSNTG…DFDTWGETSF (142 aa)). FMN-binding positions include 514–519 (SNTGTC), 561–564 (SYEG), C596, and T604. In terms of domain architecture, FAD-binding FR-type spans 685–924 (LQLQEGLVVE…RPSHTGFKPP (240 aa)).

It in the N-terminal section; belongs to the cytochrome P450 family. The cofactor is heme. FAD serves as cofactor. Requires FMN as cofactor.

The enzyme catalyses 2 oxidized [cytochrome P450] + NADPH = 2 reduced [cytochrome P450] + NADP(+) + H(+). The catalysed reaction is an organic molecule + reduced [NADPH--hemoprotein reductase] + O2 = an alcohol + oxidized [NADPH--hemoprotein reductase] + H2O + H(+). Functions as a fatty acid monooxygenase. Also displays a NADPH-dependent reductase activity in the C-terminal domain, which allows electron transfer from NADPH to the heme iron of the cytochrome P450 N-terminal domain. In Aspergillus oryzae (strain ATCC 42149 / RIB 40) (Yellow koji mold), this protein is Bifunctional cytochrome P450/NADPH--P450 reductase.